The primary structure comprises 427 residues: Steroid C26-monooxygenase (427 aa).

Heme is bound at residue Cys-360.

Belongs to the cytochrome P450 family. Requires heme as cofactor.

The catalysed reaction is cholest-4-en-3-one + 6 reduced [2Fe-2S]-[ferredoxin] + 3 O2 + 5 H(+) = (25S)-3-oxocholest-4-en-26-oate + 6 oxidized [2Fe-2S]-[ferredoxin] + 4 H2O. The protein operates within steroid metabolism; cholesterol degradation. Functionally, involved in the utilization of cholesterol as the sole carbon and energy source by degrading the side chain. Primarily catalyzes the sequential oxidation of the terminal methyl of cholest-4-en-3-one into (25S)-26-hydroxycholest-4-en-3-one (alcohol), (25S)-26-oxocholest-4-en-3-one (aldehyde), to finally yield the carboxylic acid (25S)-3-oxocholest-4-en-26-oate. Also able to sequentially oxidize cholesterol itself, not only cholest-4-en-3-one. This Mycolicibacterium smegmatis (strain ATCC 700084 / mc(2)155) (Mycobacterium smegmatis) protein is Steroid C26-monooxygenase.